We begin with the raw amino-acid sequence, 362 residues long: MAEVPPGPSSLLPPPAPPAPAAVEPRCPFPAGAALACCSEDEEDDEEHEGGGSRSPAGGESATVAAKGHPCLRCPQPPQEQQQLNGLISPELRHLRAAASLKSKVLSVAEVAATTATPDGGPRATATKGAGVHSGERPPHSLSSNARTAVPSPVEAAAASDPAAARNGLAEGTEQEEEEEDEQVRLLSSSLTADCSLRSPSGREVEPGEDRTIRYVRYESELQMPDIMRLITKDLSEPYSIYTYRYFIHNWPQLCFLAMVGEECVGAIVCKLDMHKKMFRRGYIAMLAVDSKYRRNGIGTNLVKKAIYAMVEGDCDEVVLETEITNKSALKLYENLGFVRDKRLFRYYLNGVDALRLKLWLR.

Positions Met-1–Pro-20 are enriched in pro residues. Disordered stretches follow at residues Met-1 to Arg-26, Cys-38 to Ile-88, and Ala-113 to Glu-182. Ser-39 and Ser-55 each carry phosphoserine. Acidic residues predominate over residues Ser-39–His-48. A Phosphothreonine modification is found at Thr-117. The span at Ala-149–Ala-165 shows a compositional bias: low complexity. Ser-152 is modified (phosphoserine). Residues Thr-173 to Glu-182 show a composition bias toward acidic residues. Phosphoserine is present on residues Ser-190, Ser-196, and Ser-199. The N-acetyltransferase domain maps to Arg-214–Arg-362. Lys-233 is subject to N6-acetyllysine.

Belongs to the acetyltransferase family. MAK3 subfamily. As to quaternary structure, component of the N-terminal acetyltransferase C (NatC) complex, which is composed of NAA35, NAA38 and NAA30.

Its subcellular location is the cytoplasm. The protein localises to the nucleus. It catalyses the reaction N-terminal L-methionyl-L-leucyl-[protein] + acetyl-CoA = N-terminal N(alpha)-acetyl-L-methionyl-L-leucyl-[protein] + CoA + H(+). The catalysed reaction is N-terminal L-methionyl-L-isoleucyl-[protein] + acetyl-CoA = N-terminal N(alpha)-acetyl-L-methionyl-L-isoleucyl-[protein] + CoA + H(+). The enzyme catalyses N-terminal L-methionyl-L-phenylalanyl-[protein] + acetyl-CoA = N-terminal N(alpha)-acetyl-L-methionyl-L-phenylalanyl-[protein] + CoA + H(+). It carries out the reaction N-terminal L-methionyl-L-tryptophyl-[protein] + acetyl-CoA = N-terminal N(alpha)-acetyl-L-methionyl-L-tryptophyl-[protein] + CoA + H(+). It catalyses the reaction N-terminal L-methionyl-L-tyrosyl-[protein] + acetyl-CoA = N-terminal N(alpha)-acetyl-L-methionyl-L-tyrosyl-[protein] + CoA + H(+). Its function is as follows. Catalytic subunit of the N-terminal acetyltransferase C (NatC) complex. Catalyzes acetylation of the N-terminal methionine residues of peptides beginning with Met-Leu-Ala and Met-Leu-Gly. N-terminal acetylation protects proteins from ubiquitination and degradation by the N-end rule pathway. Necessary for the lysosomal localization and function of ARL8B sugeesting that ARL8B is a NatC substrate. The chain is N-alpha-acetyltransferase 30 (NAA30) from Homo sapiens (Human).